A 1168-amino-acid chain; its full sequence is Transcription-repair-coupling factor (1168 aa).

One can recognise a Helicase ATP-binding domain in the interval 633–794; sequence DMQKSRPMDR…MLGVRDLSVI (162 aa). Position 646–653 (646–653) interacts with ATP; that stretch reads GDVGYGKT. The DEEQ box motif lies at 747–750; that stretch reads DEEQ. The Helicase C-terminal domain occupies 808 to 969; the sequence is VLEQNMSFIK…GFKIAMRDLN (162 aa).

It in the N-terminal section; belongs to the UvrB family. This sequence in the C-terminal section; belongs to the helicase family. RecG subfamily.

It localises to the cytoplasm. Functionally, couples transcription and DNA repair by recognizing RNA polymerase (RNAP) stalled at DNA lesions. Mediates ATP-dependent release of RNAP and its truncated transcript from the DNA, and recruitment of nucleotide excision repair machinery to the damaged site. This Staphylococcus aureus (strain bovine RF122 / ET3-1) protein is Transcription-repair-coupling factor.